The primary structure comprises 286 residues: Probable syntaxin-7B (286 aa).

At Met1 to Lys257 the chain is on the cytoplasmic side. Positions Leu97–His107 are enriched in basic and acidic residues. Residues Leu97–Asn160 are disordered. Residues Gln114–Asn160 are compositionally biased toward low complexity. Residues Asn185–Ala247 form the t-SNARE coiled-coil homology domain. A helical; Anchor for type IV membrane protein membrane pass occupies residues Met258–Ile278. The Vesicular segment spans residues Tyr279 to Lys286.

This sequence belongs to the syntaxin family.

It localises to the membrane. This Dictyostelium discoideum (Social amoeba) protein is Probable syntaxin-7B (syn7B).